Consider the following 312-residue polypeptide: Beta-ketoacyl-[acyl-carrier-protein] synthase III (312 aa).

Active-site residues include C112 and H237. Residues 238–242 (QANIR) are ACP-binding. N267 is an active-site residue.

This sequence belongs to the thiolase-like superfamily. FabH family. In terms of assembly, homodimer.

The protein resides in the cytoplasm. The catalysed reaction is malonyl-[ACP] + acetyl-CoA + H(+) = 3-oxobutanoyl-[ACP] + CO2 + CoA. It functions in the pathway lipid metabolism; fatty acid biosynthesis. Catalyzes the condensation reaction of fatty acid synthesis by the addition to an acyl acceptor of two carbons from malonyl-ACP. Catalyzes the first condensation reaction which initiates fatty acid synthesis and may therefore play a role in governing the total rate of fatty acid production. Possesses both acetoacetyl-ACP synthase and acetyl transacylase activities. Its substrate specificity determines the biosynthesis of branched-chain and/or straight-chain of fatty acids. This is Beta-ketoacyl-[acyl-carrier-protein] synthase III from Bacillus pumilus (strain SAFR-032).